The chain runs to 419 residues: UDP-N-acetylglucosamine 1-carboxyvinyltransferase 2 (419 aa).

24–25 provides a ligand contact to phosphoenolpyruvate; the sequence is KN. Arginine 94 serves as a coordination point for UDP-N-acetyl-alpha-D-glucosamine. Cysteine 118 acts as the Proton donor in catalysis. The residue at position 118 (cysteine 118) is a 2-(S-cysteinyl)pyruvic acid O-phosphothioketal. Residues 123 to 127, aspartate 307, and isoleucine 329 contribute to the UDP-N-acetyl-alpha-D-glucosamine site; that span reads RPIDQ.

This sequence belongs to the EPSP synthase family. MurA subfamily.

The protein localises to the cytoplasm. It carries out the reaction phosphoenolpyruvate + UDP-N-acetyl-alpha-D-glucosamine = UDP-N-acetyl-3-O-(1-carboxyvinyl)-alpha-D-glucosamine + phosphate. The protein operates within cell wall biogenesis; peptidoglycan biosynthesis. Functionally, cell wall formation. Adds enolpyruvyl to UDP-N-acetylglucosamine. In Staphylococcus epidermidis (strain ATCC 35984 / DSM 28319 / BCRC 17069 / CCUG 31568 / BM 3577 / RP62A), this protein is UDP-N-acetylglucosamine 1-carboxyvinyltransferase 2.